Here is a 351-residue protein sequence, read N- to C-terminus: Uroporphyrinogen decarboxylase (351 aa).

Substrate is bound by residues 25–29 (RQAGR), D74, Y151, S206, and H325.

The protein belongs to the uroporphyrinogen decarboxylase family. As to quaternary structure, homodimer.

It localises to the cytoplasm. The catalysed reaction is uroporphyrinogen III + 4 H(+) = coproporphyrinogen III + 4 CO2. It participates in porphyrin-containing compound metabolism; protoporphyrin-IX biosynthesis; coproporphyrinogen-III from 5-aminolevulinate: step 4/4. Catalyzes the decarboxylation of four acetate groups of uroporphyrinogen-III to yield coproporphyrinogen-III. The sequence is that of Uroporphyrinogen decarboxylase from Chlorobium limicola (strain DSM 245 / NBRC 103803 / 6330).